Here is a 120-residue protein sequence, read N- to C-terminus: MTAPETPAAQHAEPAIAVERIRTALLGYRIMAWTTGLWLIALCYEIVVRYVVKVDNPPTWIGVVHGWVYFTYLLLTLNLAVKVRWPLGKTAGVLLAGTIPLLGIVVEHFQTKEIKARFGL.

3 helical membrane passes run 24–44 (ALLGYRIMAWTTGLWLIALCY), 61–81 (IGVVHGWVYFTYLLLTLNLAV), and 86–106 (PLGKTAGVLLAGTIPLLGIVV).

The protein to M.leprae ML1176.

Its subcellular location is the cell membrane. This is an uncharacterized protein from Mycobacterium bovis (strain ATCC BAA-935 / AF2122/97).